The primary structure comprises 256 residues: Proteasome subunit alpha-type 8 (256 aa).

Belongs to the peptidase T1A family. Component of the outer alpha-ring of the 20S proteasome core which is composed of 28 subunits that are arranged in four stacked rings, resulting in a barrel-shaped structure. The catalytic chamber with the active sites is on the inside of the barrel. Interacts with canonical subunits of the spermatoproteasome, including proteasome activators PSME4 (also called PA200) and PSME3 (also called PA28-gamma). Interacts with proteasome-interacting proteins chaperones, ubiquitin ligases and ubiquitin specific proteases. Interacts with meiotic proteins cyclin dependent kinase CDK1 and the ATPase TRIP13 as well as proteins of the synaptonemal complex SIX6OS1 and SYCE3.

The protein resides in the nucleus. In terms of biological role, component of the spermatoproteasome, a proteasome specifically found in testis that promotes acetylation-dependent degradation of histones, thereby participating actively to the exchange of histones during spermatogenesis. The proteasome is a protein complex that degrades unneeded or damaged proteins by proteolysis, a chemical reaction that breaks peptide bonds. Required for 20S core proteasome assembly, essential for the degradation of meiotic proteins RAD51 and RPA1 at late prophase I and the progression of meiosis I during spermatogenesis. Localizes to the synaptonemal complex, a 'zipper'-like structure that holds homologous chromosome pairs in synapsis during meiotic prophase I. The chain is Proteasome subunit alpha-type 8 (PSMA8) from Homo sapiens (Human).